A 463-amino-acid polypeptide reads, in one-letter code: Argininosuccinate lyase (463 aa).

Belongs to the lyase 1 family. Argininosuccinate lyase subfamily.

The protein localises to the cytoplasm. It catalyses the reaction 2-(N(omega)-L-arginino)succinate = fumarate + L-arginine. It participates in amino-acid biosynthesis; L-arginine biosynthesis; L-arginine from L-ornithine and carbamoyl phosphate: step 3/3. The polypeptide is Argininosuccinate lyase (Bacillus cereus (strain AH187)).